We begin with the raw amino-acid sequence, 181 residues long: tRNA-splicing endonuclease (181 aa).

Active-site residues include Tyr-118, His-126, and Lys-157.

This sequence belongs to the tRNA-intron endonuclease family. Archaeal short subfamily. As to quaternary structure, homotetramer; although the tetramer contains four active sites, only two participate in the cleavage. Therefore, it should be considered as a dimer of dimers.

It carries out the reaction pretRNA = a 3'-half-tRNA molecule with a 5'-OH end + a 5'-half-tRNA molecule with a 2',3'-cyclic phosphate end + an intron with a 2',3'-cyclic phosphate and a 5'-hydroxyl terminus.. Functionally, endonuclease that removes tRNA introns. Cleaves pre-tRNA at the 5'- and 3'-splice sites to release the intron. The products are an intron and two tRNA half-molecules bearing 2',3' cyclic phosphate and 5'-OH termini. Recognizes a pseudosymmetric substrate in which 2 bulged loops of 3 bases are separated by a stem of 4 bp. The polypeptide is tRNA-splicing endonuclease (Hyperthermus butylicus (strain DSM 5456 / JCM 9403 / PLM1-5)).